Consider the following 315-residue polypeptide: Jacalin-related lectin 10 (315 aa).

A signal peptide spans 1 to 23 (MVIIYIFLFLSSAIIDSTGLAKA). Jacalin-type lectin domains lie at 24-165 (QKLD…YLTT) and 168-312 (PTKS…YFSP).

The protein belongs to the jacalin lectin family.

This chain is Jacalin-related lectin 10 (JAL10), found in Arabidopsis thaliana (Mouse-ear cress).